Consider the following 316-residue polypeptide: Melanocyte-stimulating hormone receptor (316 aa).

Residues 1-37 are Extracellular-facing; that stretch reads MPMQGAHRKLLGSLNSTPTATSNLGLAANHTGAPCLE. Asparagine 29 is a glycosylation site (N-linked (GlcNAc...) asparagine). The helical transmembrane segment at 38–63 threads the bilayer; the sequence is VSIPDGLFLSLGLVSLVENVLVVAAI. Residues 64 to 72 lie on the Cytoplasmic side of the membrane; it reads AKNRNLHSS. Residues 73-93 form a helical membrane-spanning segment; that stretch reads MYCFICCLALSDLLVSGSNML. At 94–118 the chain is on the extracellular side; sequence ETAVILLLEAGALATRTSVVQQLHN. A helical transmembrane segment spans residues 119–140; sequence TIDVLTCSSMLCSLCFLGAIAV. The Cytoplasmic portion of the chain corresponds to 141–163; that stretch reads DRYISIFYALRYHSIMTLPRAQR. The chain crosses the membrane as a helical span at residues 164–183; it reads AIAAIWVASVLSSTLFITYY. Topologically, residues 184-191 are extracellular; it reads DHAAVLLC. A helical membrane pass occupies residues 192 to 211; sequence LVVFFLAMLVLMAVLYVHML. Topologically, residues 212-240 are cytoplasmic; sequence ARACQHAHGIIRLHKRQSPAHQGFGLRGA. Residues 241–266 traverse the membrane as a helical segment; sequence ATLTILLGIFFLCWGPFFLHLTLVVF. Residues 267 to 279 lie on the Extracellular side of the membrane; the sequence is CPQHLTCSCIFKN. Residues 280 to 300 form a helical membrane-spanning segment; sequence FKVFLTLIICNTIIDPLIYAF. Residues 301–316 are Cytoplasmic-facing; sequence RSQELRRTLKEVLCSW. Cysteine 314 carries the S-palmitoyl cysteine lipid modification.

This sequence belongs to the G-protein coupled receptor 1 family. Interacts with MGRN1, but does not undergo MGRN1-mediated ubiquitination; this interaction competes with GNAS-binding and thus inhibits agonist-induced cAMP production. Interacts with OPN3; the interaction results in a decrease in MC1R-mediated cAMP signaling and ultimately a decrease in melanin production in melanocytes.

Its subcellular location is the cell membrane. Receptor for MSH (alpha, beta and gamma) and ACTH. The activity of this receptor is mediated by G proteins which activate adenylate cyclase. Mediates melanogenesis, the production of eumelanin (black/brown) and phaeomelanin (red/yellow), via regulation of cAMP signaling in melanocytes. The sequence is that of Melanocyte-stimulating hormone receptor (MC1R) from Leontocebus fuscicollis (Brown-mantled tamarin).